A 148-amino-acid chain; its full sequence is SsrA-binding protein (148 aa).

Residues Lys-127–Arg-142 are compositionally biased toward basic and acidic residues. A disordered region spans residues Lys-127 to Thr-148.

Belongs to the SmpB family.

Its subcellular location is the cytoplasm. In terms of biological role, required for rescue of stalled ribosomes mediated by trans-translation. Binds to transfer-messenger RNA (tmRNA), required for stable association of tmRNA with ribosomes. tmRNA and SmpB together mimic tRNA shape, replacing the anticodon stem-loop with SmpB. tmRNA is encoded by the ssrA gene; the 2 termini fold to resemble tRNA(Ala) and it encodes a 'tag peptide', a short internal open reading frame. During trans-translation Ala-aminoacylated tmRNA acts like a tRNA, entering the A-site of stalled ribosomes, displacing the stalled mRNA. The ribosome then switches to translate the ORF on the tmRNA; the nascent peptide is terminated with the 'tag peptide' encoded by the tmRNA and targeted for degradation. The ribosome is freed to recommence translation, which seems to be the essential function of trans-translation. This is SsrA-binding protein from Aromatoleum aromaticum (strain DSM 19018 / LMG 30748 / EbN1) (Azoarcus sp. (strain EbN1)).